The chain runs to 355 residues: Protein ECERIFERUM 16 (355 aa).

Disordered stretches follow at residues 1–60 (MDSK…LPSN) and 296–315 (HSST…KIHM). Basic residues predominate over residues 7 to 28 (AKSKRAHTLHHSKKSHSVHKPK). Composition is skewed to polar residues over residues 41–53 (QGNQ…QSRR) and 296–310 (HSST…NPSD).

In terms of assembly, interacts with RST1. As to expression, expressed in taproots, lateral roots, root tips, leaf veins, cauline leaves, inflorescences, flowers, and siliques.

Its subcellular location is the cytoplasm. The protein localises to the cytosol. It is found in the endoplasmic reticulum. Its function is as follows. Together with RST1, acts as a cofactor of the cytoplasmic exosome and connects the cytosolic RNA exosome to the SKI complex. Acts as a post-transcriptional gene silencing (PTGS) suppressor. CER16/RIPR can, like RST1 suppress the production of small interfering RNAs (siRNAs) from the CER3 locus, which is involved in cuticule membrane and wax production, and in the typhine and sporopollenin biosynthesis of pollen. This chain is Protein ECERIFERUM 16, found in Arabidopsis thaliana (Mouse-ear cress).